Reading from the N-terminus, the 141-residue chain is Acetyltransferase YpeA (141 aa).

The N-acetyltransferase domain maps to 1 to 141 (MEIRVFRQED…GKRLIEDEEY (141 aa)).

It belongs to the acetyltransferase family. YpeA subfamily.

This chain is Acetyltransferase YpeA, found in Shigella boydii serotype 4 (strain Sb227).